We begin with the raw amino-acid sequence, 241 residues long: 2,3,4,5-tetrahydropyridine-2,6-dicarboxylate N-acetyltransferase (241 aa).

It belongs to the transferase hexapeptide repeat family. DapH subfamily.

It catalyses the reaction (S)-2,3,4,5-tetrahydrodipicolinate + acetyl-CoA + H2O = L-2-acetamido-6-oxoheptanedioate + CoA. It functions in the pathway amino-acid biosynthesis; L-lysine biosynthesis via DAP pathway; LL-2,6-diaminopimelate from (S)-tetrahydrodipicolinate (acetylase route): step 1/3. Catalyzes the transfer of an acetyl group from acetyl-CoA to tetrahydrodipicolinate. This chain is 2,3,4,5-tetrahydropyridine-2,6-dicarboxylate N-acetyltransferase, found in Thermoanaerobacter pseudethanolicus (strain ATCC 33223 / 39E) (Clostridium thermohydrosulfuricum).